The chain runs to 80 residues: Acyl carrier protein (80 aa).

One can recognise a Carrier domain in the interval 4-79 (EEIFNKIKDL…DAVSYIKSHQ (76 aa)). Position 39 is an O-(pantetheine 4'-phosphoryl)serine (Ser39).

It belongs to the acyl carrier protein (ACP) family. In terms of processing, 4'-phosphopantetheine is transferred from CoA to a specific serine of apo-ACP by AcpS. This modification is essential for activity because fatty acids are bound in thioester linkage to the sulfhydryl of the prosthetic group.

The protein resides in the cytoplasm. The protein operates within lipid metabolism; fatty acid biosynthesis. Carrier of the growing fatty acid chain in fatty acid biosynthesis. This chain is Acyl carrier protein, found in Lactobacillus acidophilus (strain ATCC 700396 / NCK56 / N2 / NCFM).